Here is a 726-residue protein sequence, read N- to C-terminus: Catalase-peroxidase (726 aa).

Residues 1–33 (MSTTDDTHNTLSTGKCPFHQGGHDRSAGAGTAS) form a disordered region. The tryptophyl-tyrosyl-methioninium (Trp-Tyr) (with M-252) cross-link spans 105 to 226 (WHGAGTYRSI…LGATEMGLIY (122 aa)). Catalysis depends on His-106, which acts as the Proton acceptor. The segment at residues 226 to 252 (YVNPEGPDHSGEPLSAAAAIRATFGNM) is a cross-link (tryptophyl-tyrosyl-methioninium (Tyr-Met) (with W-105)). Heme b is bound at residue His-267.

It belongs to the peroxidase family. Peroxidase/catalase subfamily. In terms of assembly, homodimer or homotetramer. Heme b is required as a cofactor. Formation of the three residue Trp-Tyr-Met cross-link is important for the catalase, but not the peroxidase activity of the enzyme.

The catalysed reaction is H2O2 + AH2 = A + 2 H2O. It catalyses the reaction 2 H2O2 = O2 + 2 H2O. Its function is as follows. Bifunctional enzyme with both catalase and broad-spectrum peroxidase activity. The polypeptide is Catalase-peroxidase (Salmonella schwarzengrund (strain CVM19633)).